The primary structure comprises 524 residues: Probable malate:quinone oxidoreductase (524 aa).

The protein belongs to the MQO family. FAD is required as a cofactor.

The catalysed reaction is (S)-malate + a quinone = a quinol + oxaloacetate. The protein operates within carbohydrate metabolism; tricarboxylic acid cycle; oxaloacetate from (S)-malate (quinone route): step 1/1. In Blochmanniella floridana, this protein is Probable malate:quinone oxidoreductase.